We begin with the raw amino-acid sequence, 217 residues long: Thiamine-phosphate synthase (217 aa).

Residues 39-43 (QLRRK) and Asn-71 contribute to the 4-amino-2-methyl-5-(diphosphooxymethyl)pyrimidine site. Residues Asp-72 and Asp-91 each contribute to the Mg(2+) site. Position 110 (Ser-110) interacts with 4-amino-2-methyl-5-(diphosphooxymethyl)pyrimidine. Residue 137–139 (SPT) coordinates 2-[(2R,5Z)-2-carboxy-4-methylthiazol-5(2H)-ylidene]ethyl phosphate. Lys-140 contacts 4-amino-2-methyl-5-(diphosphooxymethyl)pyrimidine. 2-[(2R,5Z)-2-carboxy-4-methylthiazol-5(2H)-ylidene]ethyl phosphate contacts are provided by residues Gly-173 and 193–194 (IS).

Belongs to the thiamine-phosphate synthase family. The cofactor is Mg(2+).

The catalysed reaction is 2-[(2R,5Z)-2-carboxy-4-methylthiazol-5(2H)-ylidene]ethyl phosphate + 4-amino-2-methyl-5-(diphosphooxymethyl)pyrimidine + 2 H(+) = thiamine phosphate + CO2 + diphosphate. The enzyme catalyses 2-(2-carboxy-4-methylthiazol-5-yl)ethyl phosphate + 4-amino-2-methyl-5-(diphosphooxymethyl)pyrimidine + 2 H(+) = thiamine phosphate + CO2 + diphosphate. It catalyses the reaction 4-methyl-5-(2-phosphooxyethyl)-thiazole + 4-amino-2-methyl-5-(diphosphooxymethyl)pyrimidine + H(+) = thiamine phosphate + diphosphate. It participates in cofactor biosynthesis; thiamine diphosphate biosynthesis; thiamine phosphate from 4-amino-2-methyl-5-diphosphomethylpyrimidine and 4-methyl-5-(2-phosphoethyl)-thiazole: step 1/1. Its function is as follows. Condenses 4-methyl-5-(beta-hydroxyethyl)thiazole monophosphate (THZ-P) and 2-methyl-4-amino-5-hydroxymethyl pyrimidine pyrophosphate (HMP-PP) to form thiamine monophosphate (TMP). This is Thiamine-phosphate synthase from Bordetella bronchiseptica (strain ATCC BAA-588 / NCTC 13252 / RB50) (Alcaligenes bronchisepticus).